A 347-amino-acid polypeptide reads, in one-letter code: MQHLVIRRPDDWHLHLRDGGMLRGVIADTSRHFARAIIMPNLVPPVVTSADAATYRERILAAIPAGHRFEPLMTLYLTEGTDPDDVEEGFRSGLVKAVKLYPAGATTNSSSGVRDIDKAMPVLERMAEVGVPLCVHGEVTTADVDIFDREAVFIETVLDPLRRRLPDLRITMEHVTTKDGVDYIREHAVNLAGSITTHHLIINRNAILVGGIKPHYYCLPVAKREMHRLALREAAISGDVRFFLGTDSAPHVDPLKECACGCAGIYTSINSLSCLAHVFEEEGALDRLEAFTSLNGPAWYGLPPNEETITLRKQEEPVGYPAKIETEAGPVTVFDPMFPLYWTVIEA.

Positions 13 and 15 each coordinate Zn(2+). Residues 15–17 (HLR) and asparagine 41 contribute to the substrate site. The Zn(2+) site is built by lysine 99, histidine 136, and histidine 174. Lysine 99 is modified (N6-carboxylysine). Histidine 136 is a substrate binding site. Substrate is bound at residue leucine 219. Position 247 (aspartate 247) interacts with Zn(2+). The active site involves aspartate 247. Residues histidine 251 and alanine 263 each contribute to the substrate site.

This sequence belongs to the metallo-dependent hydrolases superfamily. DHOase family. Class II DHOase subfamily. As to quaternary structure, homodimer. It depends on Zn(2+) as a cofactor.

The catalysed reaction is (S)-dihydroorotate + H2O = N-carbamoyl-L-aspartate + H(+). It functions in the pathway pyrimidine metabolism; UMP biosynthesis via de novo pathway; (S)-dihydroorotate from bicarbonate: step 3/3. Its function is as follows. Catalyzes the reversible cyclization of carbamoyl aspartate to dihydroorotate. The sequence is that of Dihydroorotase from Sinorhizobium medicae (strain WSM419) (Ensifer medicae).